The chain runs to 525 residues: GMP synthase [glutamine-hydrolyzing] (525 aa).

One can recognise a Glutamine amidotransferase type-1 domain in the interval 9–207; it reads RILILDFGSQ…VRDICQCEAL (199 aa). C86 (nucleophile) is an active-site residue. Catalysis depends on residues H181 and E183. The GMPS ATP-PPase domain occupies 208 to 400; sequence WTPAKIIDDA…LGLPYDMLYR (193 aa). Position 235–241 (235–241) interacts with ATP; that stretch reads SGGVDSS.

Homodimer.

It carries out the reaction XMP + L-glutamine + ATP + H2O = GMP + L-glutamate + AMP + diphosphate + 2 H(+). It functions in the pathway purine metabolism; GMP biosynthesis; GMP from XMP (L-Gln route): step 1/1. Its function is as follows. Catalyzes the synthesis of GMP from XMP. This Salmonella arizonae (strain ATCC BAA-731 / CDC346-86 / RSK2980) protein is GMP synthase [glutamine-hydrolyzing].